The primary structure comprises 472 residues: F420-non-reducing hydrogenase subunit A (472 aa).

The Ni(2+) site is built by cysteine 61, cysteine 64, cysteine 442, and cysteine 445.

Belongs to the [NiFe]/[NiFeSe] hydrogenase large subunit family. As to quaternary structure, the F420-non-reducing hydrogenase is composed of three subunits; MvhA, MvhD and MvhG. It forms a complex with the heterodisulfide reductase (hdr). The cofactor is Ni(2+).

Part of a complex that provides reducing equivalents for heterodisulfide reductase. This is F420-non-reducing hydrogenase subunit A (mvhA) from Methanothermobacter thermautotrophicus (strain ATCC 29096 / DSM 1053 / JCM 10044 / NBRC 100330 / Delta H) (Methanobacterium thermoautotrophicum).